The sequence spans 106 residues: Urease subunit beta (106 aa).

It belongs to the urease beta subunit family. In terms of assembly, heterotrimer of UreA (gamma), UreB (beta) and UreC (alpha) subunits. Three heterotrimers associate to form the active enzyme.

The protein localises to the cytoplasm. The enzyme catalyses urea + 2 H2O + H(+) = hydrogencarbonate + 2 NH4(+). It functions in the pathway nitrogen metabolism; urea degradation; CO(2) and NH(3) from urea (urease route): step 1/1. This is Urease subunit beta from Klebsiella pneumoniae (strain 342).